The chain runs to 253 residues: 3-deoxy-manno-octulosonate cytidylyltransferase (253 aa).

This sequence belongs to the KdsB family.

Its subcellular location is the cytoplasm. It carries out the reaction 3-deoxy-alpha-D-manno-oct-2-ulosonate + CTP = CMP-3-deoxy-beta-D-manno-octulosonate + diphosphate. It participates in nucleotide-sugar biosynthesis; CMP-3-deoxy-D-manno-octulosonate biosynthesis; CMP-3-deoxy-D-manno-octulosonate from 3-deoxy-D-manno-octulosonate and CTP: step 1/1. It functions in the pathway bacterial outer membrane biogenesis; lipopolysaccharide biosynthesis. Its function is as follows. Activates KDO (a required 8-carbon sugar) for incorporation into bacterial lipopolysaccharide in Gram-negative bacteria. The chain is 3-deoxy-manno-octulosonate cytidylyltransferase from Neisseria meningitidis serogroup B (strain ATCC BAA-335 / MC58).